The primary structure comprises 400 residues: Deoxyguanosinetriphosphate triphosphohydrolase-like protein (400 aa).

An HD domain is found at 73–215 (RLTHSIEVSQ…AAIADDIAYN (143 aa)).

Belongs to the dGTPase family. Type 2 subfamily.

The chain is Deoxyguanosinetriphosphate triphosphohydrolase-like protein from Bartonella quintana (strain Toulouse) (Rochalimaea quintana).